The sequence spans 370 residues: GTPase Obg (370 aa).

Residues 1 to 159 form the Obg domain; that stretch reads MKFIDEARIE…RMLRLELKVL (159 aa). The segment at 127-146 is disordered; sequence NLHFKSSTNRAPRQKTDGKP. The region spanning 160–334 is the OBG-type G domain; the sequence is ADVGLLGMPN…LCYAIYDYLA (175 aa). GTP is bound by residues 166 to 173, 191 to 195, 213 to 216, 284 to 287, and 315 to 317; these read GMPNAGKS, FTTLA, DIPG, NKLD, and SAL. Positions 173 and 193 each coordinate Mg(2+).

This sequence belongs to the TRAFAC class OBG-HflX-like GTPase superfamily. OBG GTPase family. As to quaternary structure, monomer. Mg(2+) serves as cofactor.

The protein resides in the cytoplasm. Functionally, an essential GTPase which binds GTP, GDP and possibly (p)ppGpp with moderate affinity, with high nucleotide exchange rates and a fairly low GTP hydrolysis rate. Plays a role in control of the cell cycle, stress response, ribosome biogenesis and in those bacteria that undergo differentiation, in morphogenesis control. The protein is GTPase Obg of Burkholderia lata (strain ATCC 17760 / DSM 23089 / LMG 22485 / NCIMB 9086 / R18194 / 383).